The following is a 284-amino-acid chain: Tropomyosin beta chain (284 aa).

Position 1 is an N-acetylmethionine (M1). Residues 1-78 form a disordered region; that stretch reads MDAIKKKMQM…EKLEQAEKKA (78 aa). The stretch at 1–284 forms a coiled coil; the sequence is MDAIKKKMQM…DNALNDITSL (284 aa). 2 stretches are compositionally biased toward basic and acidic residues: residues 12–40 and 51–78; these read KLDK…KQLE and KGTE…EKKA. The residue at position 53 (T53) is a Phosphothreonine. The residue at position 61 (S61) is a Phosphoserine; by PIK3CG. T79 carries the post-translational modification Phosphothreonine. At S87 the chain carries Phosphoserine. T108 is subject to Phosphothreonine. Positions 117–136 are disordered; sequence EKAADESERGMKVIENRAMK. S158, S206, and S215 each carry phosphoserine. T252 bears the Phosphothreonine mark. Y261 is modified (phosphotyrosine). A Phosphoserine modification is found at S271. Position 282 is a phosphothreonine (T282). Phosphoserine is present on S283.

It belongs to the tropomyosin family. As to quaternary structure, homodimer. Heterodimer of an alpha (TPM1, TPM3 or TPM4) and a beta (TPM2) chain. Phosphorylated on Ser-61 by PIK3CG. Phosphorylation on Ser-61 is required for ADRB2 internalization.

Its subcellular location is the cytoplasm. The protein resides in the cytoskeleton. In terms of biological role, binds to actin filaments in muscle and non-muscle cells. Plays a central role, in association with the troponin complex, in the calcium dependent regulation of vertebrate striated muscle contraction. Smooth muscle contraction is regulated by interaction with caldesmon. In non-muscle cells is implicated in stabilizing cytoskeleton actin filaments. The non-muscle isoform may have a role in agonist-mediated receptor internalization. The chain is Tropomyosin beta chain (Tpm2) from Mus musculus (Mouse).